The following is a 1444-amino-acid chain: Probable chitinase LysM18 (1444 aa).

LysM domains are found at residues 256–302 (STVQ…HFCC) and 321–369 (TTYT…IICL). The Chitin-binding type-1 domain occupies 382–450 (NAECGPQVPG…TNGCISNCGT (69 aa)). 4 disulfide bridges follow: cysteine 385/cysteine 413, cysteine 407/cysteine 419, cysteine 412/cysteine 426, and cysteine 444/cysteine 448. One can recognise a GH18 domain in the interval 461-831 (YRKVGFYEGF…STSWTKFTSD (371 aa)). Catalysis depends on glutamate 582, which acts as the Proton donor. Chitin contacts are provided by tyrosine 583 and tryptophan 808.

This sequence belongs to the glycosyl hydrolase 18 family. Chitinase class V subfamily.

It carries out the reaction Random endo-hydrolysis of N-acetyl-beta-D-glucosaminide (1-&gt;4)-beta-linkages in chitin and chitodextrins.. Functionally, probable chitinase involved in the degradation of chitin, a component of the cell walls of fungi and exoskeletal elements of some animals (including worms and arthropods). Might be involved in manipulation of host defenses for successful infection. This is Probable chitinase LysM18 from Penicillium expansum (Blue mold rot fungus).